We begin with the raw amino-acid sequence, 167 residues long: uncharacterized protein (167 aa).

Residues H48, H127, and H131 each coordinate a divalent metal cation.

This sequence belongs to the DinB family.

This is an uncharacterized protein from Bacillus subtilis (strain 168).